Consider the following 579-residue polypeptide: Zinc finger protein 248 (579 aa).

One can recognise a KRAB domain in the interval 8-79; it reads VSFKDVCVDF…EKGFPSQCHP (72 aa). A C2H2-type 1; degenerate zinc finger spans residues 240–264; the sequence is TVCKYNECGRTFIESLKLNISQRPH. Lysine 341 participates in a covalent cross-link: Glycyl lysine isopeptide (Lys-Gly) (interchain with G-Cter in SUMO2). 7 consecutive C2H2-type zinc fingers follow at residues 380–402, 408–430, 436–458, 464–486, 492–514, 520–543, and 548–570; these read FECG…QRTH, YECT…QRTH, YECK…QRTH, YECN…QRTH, FICN…QRTH, YKCN…RTHT, and YECN…QRIH.

Belongs to the krueppel C2H2-type zinc-finger protein family.

The protein localises to the nucleus. In terms of biological role, may be involved in transcriptional regulation. In Homo sapiens (Human), this protein is Zinc finger protein 248 (ZNF248).